Consider the following 385-residue polypeptide: 1-deoxy-D-xylulose 5-phosphate reductoisomerase (385 aa).

Positions 11, 12, 13, 14, 37, 38, 39, and 123 each coordinate NADPH. Lys124 contributes to the 1-deoxy-D-xylulose 5-phosphate binding site. Residue Glu125 participates in NADPH binding. Asp149 contributes to the Mn(2+) binding site. 1-deoxy-D-xylulose 5-phosphate-binding residues include Ser150, Glu151, Ser173, and His196. Glu151 contacts Mn(2+). Residue Gly202 coordinates NADPH. 4 residues coordinate 1-deoxy-D-xylulose 5-phosphate: Ser209, Asn214, Lys215, and Glu218. Residue Glu218 coordinates Mn(2+).

The protein belongs to the DXR family. Requires Mg(2+) as cofactor. The cofactor is Mn(2+).

The enzyme catalyses 2-C-methyl-D-erythritol 4-phosphate + NADP(+) = 1-deoxy-D-xylulose 5-phosphate + NADPH + H(+). Its pathway is isoprenoid biosynthesis; isopentenyl diphosphate biosynthesis via DXP pathway; isopentenyl diphosphate from 1-deoxy-D-xylulose 5-phosphate: step 1/6. Its function is as follows. Catalyzes the NADPH-dependent rearrangement and reduction of 1-deoxy-D-xylulose-5-phosphate (DXP) to 2-C-methyl-D-erythritol 4-phosphate (MEP). The sequence is that of 1-deoxy-D-xylulose 5-phosphate reductoisomerase from Moorella thermoacetica (strain ATCC 39073 / JCM 9320).